The chain runs to 308 residues: UPF0282 protein PYRAB09800 (308 aa).

This sequence belongs to the UPF0282 family.

The protein is UPF0282 protein PYRAB09800 of Pyrococcus abyssi (strain GE5 / Orsay).